A 344-amino-acid polypeptide reads, in one-letter code: S-methyl-5'-thioadenosine phosphorylase (344 aa).

Phosphate contacts are provided by residues T51, 99–100 (RH), and 132–133 (SA). M234 is a binding site for substrate. S235 is a phosphate binding site. 258 to 260 (DYD) provides a ligand contact to substrate.

It belongs to the PNP/MTAP phosphorylase family. MTAP subfamily. As to quaternary structure, homotrimer.

Its subcellular location is the cytoplasm. The protein localises to the nucleus. The enzyme catalyses S-methyl-5'-thioadenosine + phosphate = 5-(methylsulfanyl)-alpha-D-ribose 1-phosphate + adenine. It functions in the pathway amino-acid biosynthesis; L-methionine biosynthesis via salvage pathway; S-methyl-5-thio-alpha-D-ribose 1-phosphate from S-methyl-5'-thioadenosine (phosphorylase route): step 1/1. Catalyzes the reversible phosphorylation of S-methyl-5'-thioadenosine (MTA) to adenine and 5-methylthioribose-1-phosphate. Involved in the breakdown of MTA, a major by-product of polyamine biosynthesis. Responsible for the first step in the methionine salvage pathway after MTA has been generated from S-adenosylmethionine. Has broad substrate specificity with 6-aminopurine nucleosides as preferred substrates. The protein is S-methyl-5'-thioadenosine phosphorylase of Phaeosphaeria nodorum (strain SN15 / ATCC MYA-4574 / FGSC 10173) (Glume blotch fungus).